The following is a 434-amino-acid chain: Glutamate-1-semialdehyde 2,1-aminomutase (434 aa).

Position 271 is an N6-(pyridoxal phosphate)lysine (Lys-271).

Belongs to the class-III pyridoxal-phosphate-dependent aminotransferase family. HemL subfamily. As to quaternary structure, homodimer. The cofactor is pyridoxal 5'-phosphate.

It localises to the cytoplasm. It catalyses the reaction (S)-4-amino-5-oxopentanoate = 5-aminolevulinate. The protein operates within porphyrin-containing compound metabolism; protoporphyrin-IX biosynthesis; 5-aminolevulinate from L-glutamyl-tRNA(Glu): step 2/2. It functions in the pathway porphyrin-containing compound metabolism; chlorophyll biosynthesis. The polypeptide is Glutamate-1-semialdehyde 2,1-aminomutase (Prochlorococcus marinus (strain MIT 9312)).